The sequence spans 669 residues: Myb-like protein M (669 aa).

Residues 27 to 69 (DPSLMDDEFSDNEYDLSPKDDVPSPSKRGRGQIQNGIRRSPNK) form a disordered region. Positions 30-40 (LMDDEFSDNEY) are enriched in acidic residues. HTH myb-type domains lie at 60–118 (QNGI…SPDI) and 119–170 (RKGP…SREV). DNA-binding regions (H-T-H motif) lie at residues 90–114 (WKRI…KRVL) and 142–166 (WKKI…KSLQ). The Myb-like domain maps to 172–223 (WVPKEDEVLVKKVDEMGENLSWLEVSEYLAKLKHTNTLRTALECKTRYLQLT). Disordered stretches follow at residues 226–530 (GGSI…EDNG) and 550–636 (IKNK…PHQS). Low complexity-rich tracts occupy residues 234–382 (NQSN…SSPS), 389–415 (NNNN…NSNN), and 450–464 (PTSL…SSPS). A compositionally biased stretch (polar residues) spans 465–482 (CNNSIRQPSPSPSIKTFK). Composition is skewed to low complexity over residues 483-521 (STIV…NNDN), 555-593 (NNNN…NSDN), and 611-636 (SNFK…PHQS).

The protein resides in the nucleus. The chain is Myb-like protein M (mybM) from Dictyostelium discoideum (Social amoeba).